The following is a 338-amino-acid chain: POU domain, class 4, transcription factor 3 (338 aa).

Positions 56–65 (RAEALAAVDI) match the POU-IV box motif. One can recognise a POU-specific domain in the interval 179–256 (DVESDPRELE…VLQAWLEEAE (78 aa)). A DNA-binding region (homeobox) is located at residues 274-333 (RKRKRTSIAAPEKRSLEAYFAIQPRPSSEKIAAIAEKLDLKKNVVRVWFCNQRQKQKRMK).

The protein belongs to the POU transcription factor family. Class-4 subfamily. In terms of assembly, interacts with ISL1. As to expression, brain. Seems to be specific to the retina.

The protein resides in the nucleus. The protein localises to the cytoplasm. Functionally, acts as a transcriptional activator. Acts by binding to sequences related to the consensus octamer motif 5'-ATGCAAAT-3' in the regulatory regions of its target genes. Involved in the auditory system development, required for terminal differentiation of hair cells in the inner ear. The chain is POU domain, class 4, transcription factor 3 (POU4F3) from Homo sapiens (Human).